The sequence spans 157 residues: MQASRARLFKEYKEVQREKVADPDIQLICDDTNIFKWTALIKGPSETPYEGGVFQLAFSVPEPYPLQPPQVRFLTKIFHPNVHFKTGEICLDILKNAWSPAWTLQSVCRAIIALMAHPEPDSPLNCDSGNLLRSGDVRGFNSMAQMYTRLAAMPKKG.

Positions 3 to 153 (ASRARLFKEY…AQMYTRLAAM (151 aa)) constitute a UBC core domain. Residue Cys90 is the Glycyl thioester intermediate of the active site.

This sequence belongs to the ubiquitin-conjugating enzyme family. In terms of assembly, interacts with PEX22.

It is found in the peroxisome membrane. It carries out the reaction S-ubiquitinyl-[E1 ubiquitin-activating enzyme]-L-cysteine + [E2 ubiquitin-conjugating enzyme]-L-cysteine = [E1 ubiquitin-activating enzyme]-L-cysteine + S-ubiquitinyl-[E2 ubiquitin-conjugating enzyme]-L-cysteine.. Its pathway is protein modification; protein ubiquitination. In terms of biological role, required for peroxisome biogenesis. Necessary for the developmental elimination of obsolete peroxisome matrix proteins. May be involved in the ubiquitination of PEX5, targeting it for recycling. Accepts the ubiquitin from the E1 complex and catalyzes its covalent attachment to other proteins. The sequence is that of Protein PEROXIN-4 (PEX4) from Arabidopsis thaliana (Mouse-ear cress).